Reading from the N-terminus, the 408-residue chain is 1-deoxy-D-xylulose 5-phosphate reductoisomerase (408 aa).

NADPH contacts are provided by threonine 27, glycine 28, serine 29, isoleucine 30, alanine 53, arginine 54, asparagine 55, and asparagine 140. Lysine 141 is a binding site for 1-deoxy-D-xylulose 5-phosphate. Glutamate 142 serves as a coordination point for NADPH. Mn(2+) is bound at residue aspartate 166. 4 residues coordinate 1-deoxy-D-xylulose 5-phosphate: serine 167, glutamate 168, serine 192, and histidine 215. Residue glutamate 168 participates in Mn(2+) binding. Position 221 (glycine 221) interacts with NADPH. 1-deoxy-D-xylulose 5-phosphate is bound by residues serine 228, asparagine 233, lysine 234, and glutamate 237. Glutamate 237 contributes to the Mn(2+) binding site.

The protein belongs to the DXR family. The cofactor is Mg(2+). Mn(2+) serves as cofactor.

It carries out the reaction 2-C-methyl-D-erythritol 4-phosphate + NADP(+) = 1-deoxy-D-xylulose 5-phosphate + NADPH + H(+). It functions in the pathway isoprenoid biosynthesis; isopentenyl diphosphate biosynthesis via DXP pathway; isopentenyl diphosphate from 1-deoxy-D-xylulose 5-phosphate: step 1/6. Catalyzes the NADPH-dependent rearrangement and reduction of 1-deoxy-D-xylulose-5-phosphate (DXP) to 2-C-methyl-D-erythritol 4-phosphate (MEP). This chain is 1-deoxy-D-xylulose 5-phosphate reductoisomerase, found in Nitratidesulfovibrio vulgaris (strain DP4) (Desulfovibrio vulgaris).